The primary structure comprises 127 residues: SH2 domain-containing protein 1A (127 aa).

The SH2 domain maps to 6-102 (VYHGKISRET…GIVIPLQYPV (97 aa)). The segment at 67–92 (ETAPGVHKRYFRKIKNLISAFQKPDQ) is interaction with FYN SH3 domain. At Lys89 the chain carries N6-acetyllysine. The tract at residues 104-127 (KSSPRSTQGTTGIREDPDVCLKAP) is disordered. A compositionally biased stretch (basic and acidic residues) spans 116–127 (IREDPDVCLKAP).

In terms of assembly, interacts with CD84, CD244, LY9, SLAMF1 and FYN. Interacts with NTRK1, NTRK2 and NTRK3.

It is found in the cytoplasm. Its function is as follows. Cytoplasmic adapter regulating receptors of the signaling lymphocytic activation molecule (SLAM) family such as SLAMF1, CD244, LY9, CD84, SLAMF6 and SLAMF7. In SLAM signaling seems to cooperate with SH2D1B/EAT-2. Initially it has been proposed that association with SLAMF1 prevents SLAMF1 binding to inhibitory effectors including INPP5D/SHIP1 and PTPN11/SHP-2. However, by simultaneous interactions, recruits FYN which subsequently phosphorylates and activates SLAMF1. Positively regulates CD244/2B4- and CD84-mediated natural killer (NK) cell functions. Can also promote CD48-, SLAMF6 -, LY9-, and SLAMF7-mediated NK cell activation. In the context of NK cell-mediated cytotoxicity enhances conjugate formation with target cells. May also regulate the activity of the neurotrophin receptors NTRK1, NTRK2 and NTRK3. This is SH2 domain-containing protein 1A (SH2D1A) from Saguinus oedipus (Cotton-top tamarin).